The sequence spans 140 residues: Transmembrane protein 107 (140 aa).

Helical transmembrane passes span 7 to 27 (LVPS…TLFW) and 53 to 73 (LVAA…GFLS). A glycan (N-linked (GlcNAc...) asparagine) is linked at N79. The next 2 membrane-spanning stretches (helical) occupy residues 83-103 (SLLS…FVFE) and 113-133 (IFTF…IAVF).

As to quaternary structure, part of the tectonic-like complex (also named B9 complex). Interacts with TMEM237, TMEM231, MKS1 and TMEM216.

The protein localises to the membrane. The protein resides in the cell projection. Its subcellular location is the cilium. Its function is as follows. Plays a role in cilia formation and embryonic patterning. Requires for normal Sonic hedgehog (Shh) signaling in the neural tube and acts in combination with GLI2 and GLI3 to pattern ventral and intermediate neuronal cell types. During ciliogenesis regulates the ciliary transition zone localization of some MKS complex proteins. The sequence is that of Transmembrane protein 107 from Mus musculus (Mouse).